Consider the following 348-residue polypeptide: Phosphate acyltransferase (348 aa).

Belongs to the PlsX family. In terms of assembly, homodimer. Probably interacts with PlsY.

It localises to the cytoplasm. The catalysed reaction is a fatty acyl-[ACP] + phosphate = an acyl phosphate + holo-[ACP]. Its pathway is lipid metabolism; phospholipid metabolism. Catalyzes the reversible formation of acyl-phosphate (acyl-PO(4)) from acyl-[acyl-carrier-protein] (acyl-ACP). This enzyme utilizes acyl-ACP as fatty acyl donor, but not acyl-CoA. In Synechocystis sp. (strain ATCC 27184 / PCC 6803 / Kazusa), this protein is Phosphate acyltransferase.